A 331-amino-acid polypeptide reads, in one-letter code: 5-dehydro-2-deoxygluconokinase (331 aa).

It belongs to the carbohydrate kinase PfkB family.

The catalysed reaction is 5-dehydro-2-deoxy-D-gluconate + ATP = 6-phospho-5-dehydro-2-deoxy-D-gluconate + ADP + H(+). It participates in polyol metabolism; myo-inositol degradation into acetyl-CoA; acetyl-CoA from myo-inositol: step 5/7. In terms of biological role, catalyzes the phosphorylation of 5-dehydro-2-deoxy-D-gluconate (2-deoxy-5-keto-D-gluconate or DKG) to 6-phospho-5-dehydro-2-deoxy-D-gluconate (DKGP). The protein is 5-dehydro-2-deoxygluconokinase of Photobacterium profundum (strain SS9).